A 945-amino-acid polypeptide reads, in one-letter code: Glutamyl aminopeptidase (945 aa).

The Cytoplasmic portion of the chain corresponds to 1–18 (MNFAEEEPSKKYCIKGKH). Residues 19–39 (VAIICATVVAVGLIVGLSVGL) form a helical; Signal-anchor for type II membrane protein membrane-spanning segment. Residues 40 to 945 (TRSCEPGTTP…SISEWFTSMP (906 aa)) are Extracellular-facing. The disordered stretch occupies residues 45 to 77 (PGTTPAPSNPPPHTSTALPPQDQNVCPDSDDES). 2 N-linked (GlcNAc...) asparagine glycosylation sites follow: Asn-116 and Asn-189. Residue Glu-215 coordinates substrate. Residues Asn-236 and Asn-316 are each glycosylated (N-linked (GlcNAc...) asparagine). Residue 349–353 (GAMEN) participates in substrate binding. Position 385 (His-385) interacts with Zn(2+). The Proton acceptor role is filled by Glu-386. The Zn(2+) site is built by His-389 and Glu-408. Asn-546, Asn-584, Asn-601, Asn-640, Asn-669, Asn-754, Asn-766, and Asn-792 each carry an N-linked (GlcNAc...) asparagine glycan. Arg-878 contacts substrate.

It belongs to the peptidase M1 family. Homodimer; disulfide-linked. It depends on Zn(2+) as a cofactor. In terms of tissue distribution, highest expression in kidney proximal tubules and ileum enterocytes. High expression also detected in liver and pituitary. Lower levels in heart, adrenal gland and brain. Not detected in aorta, lung or spleen. In heart, higher levels in ventricle than in atrium. Also expressed in glomerular mesangial cells.

It localises to the cell membrane. It catalyses the reaction Release of N-terminal glutamate (and to a lesser extent aspartate) from a peptide.. With respect to regulation, substrate specificity is modulated by calcium which enhances the enzymatic activity for cleavage of acidic residues while reducing its activity with basic residues. Inhibited by aminopeptidase inhibitors amastatin and bestatin. Its function is as follows. Regulates central hypertension through its calcium-modulated preference to cleave N-terminal acidic residues from peptides such as angiotensin II. The polypeptide is Glutamyl aminopeptidase (Enpep) (Rattus norvegicus (Rat)).